Here is a 359-residue protein sequence, read N- to C-terminus: Peptide chain release factor 1 (359 aa).

Gln235 is modified (N5-methylglutamine).

Belongs to the prokaryotic/mitochondrial release factor family. In terms of processing, methylated by PrmC. Methylation increases the termination efficiency of RF1.

The protein resides in the cytoplasm. In terms of biological role, peptide chain release factor 1 directs the termination of translation in response to the peptide chain termination codons UAG and UAA. The protein is Peptide chain release factor 1 of Verminephrobacter eiseniae (strain EF01-2).